A 509-amino-acid chain; its full sequence is Steroid 17-alpha-hydroxylase/17,20 lyase (509 aa).

Cys-440 provides a ligand contact to heme.

It belongs to the cytochrome P450 family. Requires heme as cofactor.

The protein resides in the endoplasmic reticulum membrane. It is found in the microsome membrane. The enzyme catalyses a C21-steroid + reduced [NADPH--hemoprotein reductase] + O2 = a 17alpha-hydroxy-C21-steroid + oxidized [NADPH--hemoprotein reductase] + H2O + H(+). It carries out the reaction progesterone + reduced [NADPH--hemoprotein reductase] + O2 = 17alpha-hydroxyprogesterone + oxidized [NADPH--hemoprotein reductase] + H2O + H(+). The catalysed reaction is pregnenolone + reduced [NADPH--hemoprotein reductase] + O2 = 17alpha-hydroxypregnenolone + oxidized [NADPH--hemoprotein reductase] + H2O + H(+). It catalyses the reaction 17alpha-hydroxyprogesterone + reduced [NADPH--hemoprotein reductase] + O2 = androst-4-ene-3,17-dione + acetate + oxidized [NADPH--hemoprotein reductase] + H2O + 2 H(+). The enzyme catalyses 17alpha-hydroxyprogesterone + reduced [NADPH--hemoprotein reductase] + O2 = 16alpha,17alpha-dihydroxyprogesterone + oxidized [NADPH--hemoprotein reductase] + H2O + H(+). It carries out the reaction 16alpha,17alpha-dihydroxyprogesterone + reduced [NADPH--hemoprotein reductase] + O2 = 6beta,16alpha,17alpha-trihydroxyprogesterone + oxidized [NADPH--hemoprotein reductase] + H2O + H(+). The catalysed reaction is 17alpha-hydroxypregnenolone + reduced [NADPH--hemoprotein reductase] + O2 = 3beta-hydroxyandrost-5-en-17-one + acetate + oxidized [NADPH--hemoprotein reductase] + H2O + 2 H(+). It catalyses the reaction 16alpha,17alpha-dihydroxypregnenolone + reduced [NADPH--hemoprotein reductase] + O2 = 3beta,16alpha-dihydroxy-androst-5-en-17-one + acetate + oxidized [NADPH--hemoprotein reductase] + H2O + 2 H(+). The enzyme catalyses 3beta-hydroxyandrost-5-en-17-one + reduced [NADPH--hemoprotein reductase] + O2 = 3beta,16alpha-dihydroxy-androst-5-en-17-one + oxidized [NADPH--hemoprotein reductase] + H2O + H(+). It carries out the reaction androst-4-ene-3,17-dione + reduced [NADPH--hemoprotein reductase] + O2 = 16alpha-hydroxyandrost-4-ene-3,17-dione + oxidized [NADPH--hemoprotein reductase] + H2O + H(+). The protein operates within steroid hormone biosynthesis. It functions in the pathway steroid biosynthesis; glucocorticoid biosynthesis. With respect to regulation, regulated predominantly by intracellular cAMP levels. The 17,20-lyase activity is stimulated by cytochrome b5, which acts as an allosteric effector increasing the Vmax of the lyase activity. In terms of biological role, a cytochrome P450 monooxygenase involved in corticoid and androgen biosynthesis. Catalyzes 17-alpha hydroxylation of C21 steroids, which is common for both pathways. A second oxidative step, required only for androgen synthesis, involves an acyl-carbon cleavage. The 17-alpha hydroxy intermediates, as part of adrenal glucocorticoids biosynthesis pathway, are precursors of cortisol. Hydroxylates steroid hormones, pregnenolone and progesterone to form 17-alpha hydroxy metabolites, followed by the cleavage of the C17-C20 bond to form C19 steroids, dehydroepiandrosterone (DHEA) and androstenedione. Has 16-alpha hydroxylase activity. Catalyzes 16-alpha hydroxylation of 17-alpha hydroxy pregnenolone, followed by the cleavage of the C17-C20 bond to form 16-alpha-hydroxy DHEA. Also 16-alpha hydroxylates androgens, relevant for estriol synthesis. Mechanistically, uses molecular oxygen inserting one oxygen atom into a substrate, and reducing the second into a water molecule, with two electrons provided by NADPH via cytochrome P450 reductase (CPR; NADPH-ferrihemoprotein reductase). The chain is Steroid 17-alpha-hydroxylase/17,20 lyase (Cyp17a1) from Peromyscus leucopus (White-footed mouse).